The sequence spans 101 residues: Small ribosomal subunit protein uS14 (101 aa).

The protein belongs to the universal ribosomal protein uS14 family. In terms of assembly, part of the 30S ribosomal subunit. Contacts proteins S3 and S10.

In terms of biological role, binds 16S rRNA, required for the assembly of 30S particles and may also be responsible for determining the conformation of the 16S rRNA at the A site. This is Small ribosomal subunit protein uS14 from Chlamydia caviae (strain ATCC VR-813 / DSM 19441 / 03DC25 / GPIC) (Chlamydophila caviae).